The chain runs to 149 residues: 3-dehydroquinate dehydratase (149 aa).

The Proton acceptor role is filled by Tyr21. Positions 73, 79, and 86 each coordinate substrate. Residue His99 is the Proton donor of the active site. Substrate is bound by residues 100–101 and Arg110; that span reads LT.

Belongs to the type-II 3-dehydroquinase family. In terms of assembly, homododecamer.

It carries out the reaction 3-dehydroquinate = 3-dehydroshikimate + H2O. Its pathway is metabolic intermediate biosynthesis; chorismate biosynthesis; chorismate from D-erythrose 4-phosphate and phosphoenolpyruvate: step 3/7. In terms of biological role, catalyzes a trans-dehydration via an enolate intermediate. The sequence is that of 3-dehydroquinate dehydratase from Thermus thermophilus (strain ATCC BAA-163 / DSM 7039 / HB27).